The primary structure comprises 119 residues: MICOS complex subunit MIC13 (119 aa).

Over 1-7 the chain is Mitochondrial matrix; the sequence is MVARVWS. A helical membrane pass occupies residues 8–26; that stretch reads LMRFLIKGSVAGGAVYLVY. The Mitochondrial intermembrane segment spans residues 27 to 119; sequence DQELLGPSDK…GWEYLKEHSK (93 aa).

Belongs to the MICOS complex subunit Mic13 family. Component of the mitochondrial contact site and cristae organizing system (MICOS) complex, composed of at least MICOS10/MIC10, CHCHD3/MIC19, CHCHD6/MIC25, APOO/MIC26, MICOS13/MIC13, APOOL/MIC27 and IMMT/MIC60. The MICOS complex associates with mitochondrial outer membrane proteins SAMM50, MTX1 and MTX2 (together described as components of the mitochondrial outer membrane sorting assembly machinery (SAM) complex) and DNAJC11, mitochondrial inner membrane protein TMEM11 and with HSPA9. The MICOS and SAM complexes together with DNAJC11 are part of a large protein complex spanning both membranes termed the mitochondrial intermembrane space bridging (MIB) complex.

The protein localises to the mitochondrion inner membrane. Its function is as follows. Component of the MICOS complex, a large protein complex of the mitochondrial inner membrane that plays crucial roles in the maintenance of crista junctions, inner membrane architecture, and formation of contact sites to the outer membrane. Constituent of mature MICOS complex, it is required for the formation of cristae junction (CJ) and maintenance of cristae morphology. Required for the incorporation of MICOS10/MIC10 into the MICOS complex. This chain is MICOS complex subunit MIC13 (Micos13), found in Mus musculus (Mouse).